Here is a 418-residue protein sequence, read N- to C-terminus: Sialidase-3 (418 aa).

The FRIP motif signature appears at 24-27 (YRIP). Substrate is bound by residues arginine 25 and arginine 45. Aspartate 50 (proton acceptor) is an active-site residue. A BNR 1 repeat occupies 129–140 (LCSEDAGCSWGE). Substrate contacts are provided by tyrosine 179 and tyrosine 181. A BNR 2 repeat occupies 203 to 214 (SDDFGVTWHHGK). Substrate-binding residues include glutamate 223 and arginine 243. One copy of the BNR 3 repeat lies at 254 to 265 (STDSGGCFQKPT). Serine 312 is subject to Phosphoserine. Arginine 339 provides a ligand contact to substrate. The active-site Nucleophile is the tyrosine 369. The active site involves glutamate 386.

It belongs to the glycosyl hydrolase 33 family. As to quaternary structure, interacts with CAV1; this interaction enhances NEU3 sialidase activity within caveola. Interacts with EGFR; this interaction mediates desialylation of EGFR and enhances downstream signaling. Post-translationally, palmitoylated; may regulate intracellular trafficking and anchorage to plasma membrane and endomembranes. In terms of tissue distribution, expressed in heart, brain and cerebral cortex.

It is found in the cell membrane. Its subcellular location is the membrane. The protein resides in the caveola. It localises to the early endosome membrane. The protein localises to the recycling endosome membrane. It is found in the lysosome membrane. It carries out the reaction Hydrolysis of alpha-(2-&gt;3)-, alpha-(2-&gt;6)-, alpha-(2-&gt;8)- glycosidic linkages of terminal sialic acid residues in oligosaccharides, glycoproteins, glycolipids, colominic acid and synthetic substrates.. The catalysed reaction is a ganglioside GD1a + H2O = a ganglioside GM1 + N-acetylneuraminate. The enzyme catalyses a ganglioside GD1a (d18:1(4E)) + H2O = a ganglioside GM1 (d18:1(4E)) + N-acetylneuraminate. It catalyses the reaction a ganglioside GD1b + H2O = a ganglioside GM1 + N-acetylneuraminate. It carries out the reaction a ganglioside GD1b (d18:1(4E)) + H2O = a ganglioside GM1 (d18:1(4E)) + N-acetylneuraminate. The catalysed reaction is a ganglioside GD3 + H2O = a ganglioside GM3 + N-acetylneuraminate. The enzyme catalyses a ganglioside GD3 (d18:1(4E)) + H2O = a ganglioside GM3 (d18:1(4E)) + N-acetylneuraminate. It catalyses the reaction a ganglioside GM3 + H2O = a beta-D-galactosyl-(1-&gt;4)-beta-D-glucosyl-(1&lt;-&gt;1)-ceramide + N-acetylneuraminate. It carries out the reaction a ganglioside GM1 + H2O = a ganglioside GA1 + N-acetylneuraminate. The catalysed reaction is a ganglioside GM1 (d18:1(4E)) + H2O = a ganglioside GA1 (d18:1(4E)) + N-acetylneuraminate. The enzyme catalyses a ganglioside GM2 (d18:1(4E)) + H2O = a ganglioside GA2 (d18:1(4E)) + N-acetylneuraminate. It catalyses the reaction a ganglioside GM3 (d18:1(4E)) + H2O = a beta-D-Gal-(1-&gt;4)-beta-D-Glc-(1&lt;-&gt;1)-Cer(d18:1(4E)) + N-acetylneuraminate. It carries out the reaction a ganglioside GT1b + H2O = a ganglioside GD1b + N-acetylneuraminate. Exo-alpha-sialidase that catalyzes the hydrolytic cleavage of the terminal sialic acid (N-acetylneuraminic acid, Neu5Ac) of a glycan moiety in the catabolism of glycolipids, glycoproteins and oligosacharides. Displays high catalytic efficiency for gangliosides including alpha-(2-&gt;3)-sialylated GD1a and GM3 and alpha-(2-&gt;8)-sialylated GD3. Plays a role in the regulation of transmembrane signaling through the modulation of ganglioside content of the lipid bilayer and by direct interaction with signaling receptors, such as EGFR. Desialylates EGFR and activates downstream signaling in proliferating cells. Contributes to clathrin-mediated endocytosis by regulating sorting of endocytosed receptors to early and recycling endosomes. This is Sialidase-3 (Neu3) from Mus musculus (Mouse).